The primary structure comprises 670 residues: Zinc finger and BTB domain-containing protein 5 (670 aa).

One can recognise a BTB domain in the interval 24-93; sequence CDCVIVVGNR…MYTSTLMLGE (70 aa). Disordered stretches follow at residues 158 to 256 and 268 to 382; these read LSSS…QEDG and EDAQ…SSTD. Polar residues predominate over residues 170–181; the sequence is PMSSSMRSSLDQ. Serine 234 bears the Phosphoserine mark. Lysine 239 participates in a covalent cross-link: Glycyl lysine isopeptide (Lys-Gly) (interchain with G-Cter in SUMO2). The segment covering 285–295 has biased composition (polar residues); the sequence is SRATQVETSFE. Glycyl lysine isopeptide (Lys-Gly) (interchain with G-Cter in SUMO2) cross-links involve residues lysine 317 and lysine 325. Over residues 345 to 360 the composition is skewed to low complexity; the sequence is AEGSESVEVEGVVVSA. Over residues 361-374 the composition is skewed to basic and acidic residues; the sequence is EKIDLSPESSDRSF. Serine 366 carries the phosphoserine modification. Residues lysine 399 and lysine 410 each participate in a glycyl lysine isopeptide (Lys-Gly) (interchain with G-Cter in SUMO2) cross-link. Residues 414–432 show a composition bias toward polar residues; that stretch reads SNFSASQSTDDNLPNTTSD. Disordered stretches follow at residues 414-433 and 442-470; these read SNFSASQSTDDNLPNTTSDC and LLSPEAGPAGGPSSAPGSHVENPFSEPAD. Over residues 444–459 the composition is skewed to low complexity; it reads SPEAGPAGGPSSAPGS. Glycyl lysine isopeptide (Lys-Gly) (interchain with G-Cter in SUMO2) cross-links involve residues lysine 535, lysine 587, and lysine 590. The C2H2-type 1 zinc-finger motif lies at 606-628; sequence YACKICCKTFLTLTDCKKHIRVH. The C2H2-type 2; atypical zinc-finger motif lies at 634 to 657; it reads YACLKCGKRFSQSSHLYKHSKTTC. Residues lysine 638 and lysine 651 each participate in a glycyl lysine isopeptide (Lys-Gly) (interchain with G-Cter in SUMO2) cross-link.

It is found in the nucleus. May be involved in transcriptional regulation. The polypeptide is Zinc finger and BTB domain-containing protein 5 (Zbtb5) (Mus musculus (Mouse)).